We begin with the raw amino-acid sequence, 40 residues long: MSKDLLKYLSTAPVLLTAWMSLTAGMIIEIQRFFPDSLSF.

A helical transmembrane segment spans residues 12-34; sequence APVLLTAWMSLTAGMIIEIQRFF.

Belongs to the PsaJ family.

It is found in the plastid. The protein resides in the chloroplast thylakoid membrane. May help in the organization of the PsaE and PsaF subunits. In Emiliania huxleyi (Coccolithophore), this protein is Photosystem I reaction center subunit IX.